Reading from the N-terminus, the 244-residue chain is Maintenance of ploidy protein mob2 (244 aa).

Positions 14 to 45 are disordered; sequence NRSKRHQNLSDASSSSGSFSKKSSTSQLVRTG. The span at 23 to 39 shows a compositional bias: low complexity; the sequence is SDASSSSGSFSKKSSTS. Phosphoserine occurs at positions 46 and 48.

This sequence belongs to the MOB1/phocein family. As to quaternary structure, interacts with orb6.

The protein localises to the cytoplasm. It is found in the cell cortex. Functionally, required for coordinating polarized cell growth during interphase with the onset of mitosis. This chain is Maintenance of ploidy protein mob2 (mob2), found in Schizosaccharomyces pombe (strain 972 / ATCC 24843) (Fission yeast).